The primary structure comprises 152 residues: Large ribosomal subunit protein bL9 (152 aa).

The protein belongs to the bacterial ribosomal protein bL9 family.

Its function is as follows. Binds to the 23S rRNA. This chain is Large ribosomal subunit protein bL9, found in Crocosphaera subtropica (strain ATCC 51142 / BH68) (Cyanothece sp. (strain ATCC 51142)).